A 122-amino-acid chain; its full sequence is Small ribosomal subunit protein uS13 (122 aa).

Residues 93–122 are disordered; it reads RRGLPVRGQRTKTNARTRKGPKKTVAGKKK.

It belongs to the universal ribosomal protein uS13 family. Part of the 30S ribosomal subunit. Forms a loose heterodimer with protein S19. Forms two bridges to the 50S subunit in the 70S ribosome.

Its function is as follows. Located at the top of the head of the 30S subunit, it contacts several helices of the 16S rRNA. In the 70S ribosome it contacts the 23S rRNA (bridge B1a) and protein L5 of the 50S subunit (bridge B1b), connecting the 2 subunits; these bridges are implicated in subunit movement. Contacts the tRNAs in the A and P-sites. The chain is Small ribosomal subunit protein uS13 from Micrococcus luteus (strain ATCC 4698 / DSM 20030 / JCM 1464 / CCM 169 / CCUG 5858 / IAM 1056 / NBRC 3333 / NCIMB 9278 / NCTC 2665 / VKM Ac-2230) (Micrococcus lysodeikticus).